We begin with the raw amino-acid sequence, 226 residues long: Probable functional amyloid protease FapD (226 aa).

The first 18 residues, 1–18 (MRRATLCLLLLLAGPSWA), serve as a signal peptide directing secretion. In terms of domain architecture, Peptidase C39 spans 50–180 (QKTDFSCGAA…AGWNGIVFAV (131 aa)). Residue cysteine 56 is part of the active site.

The protein belongs to the FapD family.

Its subcellular location is the periplasm. Functionally, probable cysteine protease that is involved in processing fibril precursors. Upon overexpression of the endogenous six-gene locus (fapA-fapF) in situ, cells form large clumps during liquid growth, make large amounts of biofilm and produce amyloid fibrils. Expression of the 6 gene operon in E.coli strain BL21(DE3) induces flocculation and biofilm formation with copious extracellular fibrils. The polypeptide is Probable functional amyloid protease FapD (Pseudomonas fluorescens).